The chain runs to 271 residues: Chymotrypsin-like elastase family member 2A (271 aa).

The signal sequence occupies residues 1–16 (MIRTLLLSALVAGALS). Residues 17–30 (CGYPTYEVQHDVSR) constitute a propeptide, activation peptide. The Peptidase S1 domain occupies 31 to 269 (VVGGQEASPN…YIDWINSVIA (239 aa)). An intrachain disulfide couples C60 to C76. Active-site charge relay system residues include H75 and D123. 3 cysteine pairs are disulfide-bonded: C157–C224, C188–C204, and C214–C245. Catalysis depends on S218, which acts as the Charge relay system.

This sequence belongs to the peptidase S1 family. Elastase subfamily. Interacts with CPA1. Interacts with SERPINA1. In terms of tissue distribution, pancreas.

It is found in the secreted. The catalysed reaction is Preferential cleavage: Leu-|-Xaa, Met-|-Xaa and Phe-|-Xaa. Hydrolyzes elastin.. Elastase that enhances insulin signaling and might have a physiologic role in cellular glucose metabolism. Circulates in plasma and reduces platelet hyperactivation, triggers both insulin secretion and degradation, and increases insulin sensitivity. This chain is Chymotrypsin-like elastase family member 2A (Cela2a), found in Rattus norvegicus (Rat).